The primary structure comprises 403 residues: S-adenosylmethionine synthase (403 aa).

Position 15 (His15) interacts with ATP. Residue Asp17 participates in Mg(2+) binding. Glu43 is a binding site for K(+). L-methionine is bound by residues Glu56 and Gln99. Positions 99 to 109 (QSPHIAQGVDR) are flexible loop. Residues 166–168 (DAK), 232–233 (KF), Asp241, 247–248 (RK), Ala264, and Lys268 contribute to the ATP site. Asp241 provides a ligand contact to L-methionine. Lys272 provides a ligand contact to L-methionine.

This sequence belongs to the AdoMet synthase family. As to quaternary structure, homotetramer; dimer of dimers. Mg(2+) is required as a cofactor. It depends on K(+) as a cofactor.

The protein resides in the cytoplasm. It catalyses the reaction L-methionine + ATP + H2O = S-adenosyl-L-methionine + phosphate + diphosphate. It functions in the pathway amino-acid biosynthesis; S-adenosyl-L-methionine biosynthesis; S-adenosyl-L-methionine from L-methionine: step 1/1. In terms of biological role, catalyzes the formation of S-adenosylmethionine (AdoMet) from methionine and ATP. The overall synthetic reaction is composed of two sequential steps, AdoMet formation and the subsequent tripolyphosphate hydrolysis which occurs prior to release of AdoMet from the enzyme. This is S-adenosylmethionine synthase from Stenotrophomonas maltophilia (strain K279a).